The following is a 227-amino-acid chain: MTKNEYLIEKLQANLANHITELTSAYGEVTIECEVHNLLPVMIELRDREEFSFDQLIDLCGVDYLHYGDYDWETESATEHGFSRGVERQEAKAYAVNKPRFAVVYHLLSTKKNHRLRVKLFVEESHLIVPSVHHLWKSANWFEREAYDLYGILFDGHPDLRRLLTDYGFIGHPFRKDFPLSGEVEMRYDAKLQKVIYAPVDIVPRIVVPKVIRNDNRYIGNEGSKND.

The protein belongs to the complex I 30 kDa subunit family. In terms of assembly, NDH-1 is composed of 14 different subunits. Subunits NuoB, C, D, E, F, and G constitute the peripheral sector of the complex.

The protein localises to the cell inner membrane. It carries out the reaction a quinone + NADH + 5 H(+)(in) = a quinol + NAD(+) + 4 H(+)(out). NDH-1 shuttles electrons from NADH, via FMN and iron-sulfur (Fe-S) centers, to quinones in the respiratory chain. The immediate electron acceptor for the enzyme in this species is believed to be ubiquinone. Couples the redox reaction to proton translocation (for every two electrons transferred, four hydrogen ions are translocated across the cytoplasmic membrane), and thus conserves the redox energy in a proton gradient. The protein is NADH-quinone oxidoreductase subunit C of Legionella pneumophila (strain Paris).